The sequence spans 361 residues: Mitogen-activated protein kinase 14A (361 aa).

Residues 25 to 309 enclose the Protein kinase domain; sequence YQNLSPVGSG…AAEALAHPYF (285 aa). Residues 31–39 and Lys54 contribute to the ATP site; that span reads VGSGAYGSV. Asp169 (proton acceptor) is an active-site residue. Position 181 is a phosphothreonine; by MAP2K3 (Thr181). Positions 181 to 183 match the TXY motif; it reads TGY. The residue at position 183 (Tyr183) is a Phosphotyrosine; by MAP2K3.

The protein belongs to the protein kinase superfamily. CMGC Ser/Thr protein kinase family. MAP kinase subfamily. Mg(2+) serves as cofactor. Dually phosphorylated on Thr-181 and Tyr-183, which activates the enzyme.

It is found in the cytoplasm. The protein resides in the nucleus. It carries out the reaction L-seryl-[protein] + ATP = O-phospho-L-seryl-[protein] + ADP + H(+). The enzyme catalyses L-threonyl-[protein] + ATP = O-phospho-L-threonyl-[protein] + ADP + H(+). Activated by threonine and tyrosine phosphorylation by the dual specificity kinase, MKK3. Its function is as follows. Serine/threonine kinase which acts as an essential component of the MAP kinase signal transduction pathway. Mapk14a is one of the four p38 MAPKs which play an important role in the cascades of cellular responses evoked by extracellular stimuli such as pro-inflammatory cytokines or physical stress leading to direct activation of transcription factors. Accordingly, p38 MAPKs phosphorylate a broad range of proteins and it has been estimated that they may have approximately 200 to 300 substrates each. Some of the targets are downstream kinases which are activated through phosphorylation and further phosphorylate additional targets. Required for cytokinesis on the future dorsal side of the blastodisc, suggesting a role in symmetrical and synchronous blastomere cleavage. The protein is Mitogen-activated protein kinase 14A (mapk14a) of Danio rerio (Zebrafish).